Reading from the N-terminus, the 245-residue chain is Uracil-DNA glycosylase (245 aa).

Asp82 functions as the Proton acceptor in the catalytic mechanism.

The protein belongs to the uracil-DNA glycosylase (UDG) superfamily. UNG family.

It is found in the cytoplasm. It carries out the reaction Hydrolyzes single-stranded DNA or mismatched double-stranded DNA and polynucleotides, releasing free uracil.. Its function is as follows. Excises uracil residues from the DNA which can arise as a result of misincorporation of dUMP residues by DNA polymerase or due to deamination of cytosine. This Deinococcus geothermalis (strain DSM 11300 / CIP 105573 / AG-3a) protein is Uracil-DNA glycosylase.